A 321-amino-acid chain; its full sequence is 1D-myo-inositol 2-acetamido-2-deoxy-alpha-D-glucopyranoside deacetylase (321 aa).

Zn(2+) contacts are provided by H15, D18, and H150. The tract at residues P280–A321 is disordered. Residues A290–A321 are compositionally biased toward low complexity.

Belongs to the MshB deacetylase family. Zn(2+) is required as a cofactor.

The enzyme catalyses 1D-myo-inositol 2-acetamido-2-deoxy-alpha-D-glucopyranoside + H2O = 1D-myo-inositol 2-amino-2-deoxy-alpha-D-glucopyranoside + acetate. In terms of biological role, catalyzes the deacetylation of 1D-myo-inositol 2-acetamido-2-deoxy-alpha-D-glucopyranoside (GlcNAc-Ins) in the mycothiol biosynthesis pathway. The protein is 1D-myo-inositol 2-acetamido-2-deoxy-alpha-D-glucopyranoside deacetylase of Streptomyces griseus subsp. griseus (strain JCM 4626 / CBS 651.72 / NBRC 13350 / KCC S-0626 / ISP 5235).